An 863-amino-acid polypeptide reads, in one-letter code: Alanine--tRNA ligase (863 aa).

Positions 552, 556, 654, and 658 each coordinate Zn(2+).

The protein belongs to the class-II aminoacyl-tRNA synthetase family. Zn(2+) serves as cofactor.

Its subcellular location is the cytoplasm. It catalyses the reaction tRNA(Ala) + L-alanine + ATP = L-alanyl-tRNA(Ala) + AMP + diphosphate. Its function is as follows. Catalyzes the attachment of alanine to tRNA(Ala) in a two-step reaction: alanine is first activated by ATP to form Ala-AMP and then transferred to the acceptor end of tRNA(Ala). Also edits incorrectly charged Ser-tRNA(Ala) and Gly-tRNA(Ala) via its editing domain. The protein is Alanine--tRNA ligase of Halorhodospira halophila (strain DSM 244 / SL1) (Ectothiorhodospira halophila (strain DSM 244 / SL1)).